We begin with the raw amino-acid sequence, 72 residues long: Protein RALF-like 36 (72 aa).

The first 27 residues, 1-27, serve as a signal peptide directing secretion; the sequence is MGISKKTVVQSFALIIIISIVMSTTEA. Intrachain disulfides connect cysteine 43-cysteine 51 and cysteine 63-cysteine 69.

The protein belongs to the plant rapid alkalinization factor (RALF) family.

The protein resides in the secreted. Functionally, cell signaling peptide that may regulate plant stress, growth, and development. Mediates a rapid alkalinization of extracellular space by mediating a transient increase in the cytoplasmic Ca(2+) concentration leading to a calcium-dependent signaling events through a cell surface receptor and a concomitant activation of some intracellular mitogen-activated protein kinases. The protein is Protein RALF-like 36 of Arabidopsis thaliana (Mouse-ear cress).